We begin with the raw amino-acid sequence, 447 residues long: N-succinylarginine dihydrolase (447 aa).

Substrate-binding positions include 19-28, asparagine 110, and 137-138; these read AGLSFGNEAS and HR. Glutamate 174 is an active-site residue. Arginine 212 contacts substrate. The active site involves histidine 248. Substrate contacts are provided by aspartate 250 and asparagine 359. The active-site Nucleophile is the cysteine 365.

Belongs to the succinylarginine dihydrolase family. As to quaternary structure, homodimer.

It catalyses the reaction N(2)-succinyl-L-arginine + 2 H2O + 2 H(+) = N(2)-succinyl-L-ornithine + 2 NH4(+) + CO2. The protein operates within amino-acid degradation; L-arginine degradation via AST pathway; L-glutamate and succinate from L-arginine: step 2/5. In terms of biological role, catalyzes the hydrolysis of N(2)-succinylarginine into N(2)-succinylornithine, ammonia and CO(2). The sequence is that of N-succinylarginine dihydrolase from Escherichia coli O7:K1 (strain IAI39 / ExPEC).